The chain runs to 225 residues: MOB-like protein phocein (225 aa).

Zn(2+) is bound by residues cysteine 92, cysteine 97, cysteine 110, histidine 113, cysteine 119, histidine 127, histidine 169, and histidine 174.

The protein belongs to the MOB1/phocein family. In terms of assembly, binds STRN4. Interacts with DNM1 and EPS15. Interacts with nucleoside diphosphate kinase. Interacts with CTTNBP2. Interacts with CTTNBP2NL. Part of the core of STRIPAK complexes composed of PP2A catalytic and scaffolding subunits, the striatins (PP2A regulatory subunits), the striatin-associated proteins MOB4, STRIP1 and STRIP2, PDCD10 and members of the STE20 kinases, such as STK24 and STK26. Phosphorylated on serine residues. Highly expressed in adrenal gland, spinal cord, brain and cerebellum. Detected at lower levels in heart and skeletal muscle, and at very low levels in spleen, liver and intestine.

It is found in the cytoplasm. It localises to the membrane. Its subcellular location is the golgi apparatus. The protein resides in the golgi stack membrane. Functionally, part of the striatin-interacting phosphatase and kinase (STRIPAK) complexes. STRIPAK complexes have critical roles in protein (de)phosphorylation and are regulators of multiple signaling pathways including Hippo, MAPK, nuclear receptor and cytoskeleton remodeling. Different types of STRIPAK complexes are involved in a variety of biological processes such as cell growth, differentiation, apoptosis, metabolism and immune regulation. This Rattus norvegicus (Rat) protein is MOB-like protein phocein (Mob4).